The sequence spans 210 residues: Cytochrome c biogenesis ATP-binding export protein CcmA (210 aa).

The 204-residue stretch at 4–207 (LAVRDLAVAR…RQSRPAGFNE (204 aa)) folds into the ABC transporter domain. 36–43 (GPNGIGKT) is a binding site for ATP.

Belongs to the ABC transporter superfamily. CcmA exporter (TC 3.A.1.107) family. As to quaternary structure, the complex is composed of two ATP-binding proteins (CcmA) and two transmembrane proteins (CcmB).

The protein resides in the cell inner membrane. It catalyses the reaction heme b(in) + ATP + H2O = heme b(out) + ADP + phosphate + H(+). Functionally, part of the ABC transporter complex CcmAB involved in the biogenesis of c-type cytochromes; once thought to export heme, this seems not to be the case, but its exact role is uncertain. Responsible for energy coupling to the transport system. This chain is Cytochrome c biogenesis ATP-binding export protein CcmA, found in Paracoccus denitrificans (strain Pd 1222).